A 255-amino-acid chain; its full sequence is Tabinhibitin 7 (255 aa).

A signal peptide spans 1–23 (MTSILVSSFLLATLVLQYATIDA). A Cell attachment site motif is present at residues 32–34 (RGD). The region spanning 67-211 (LSKINDVRDH…KARALLTCNF (145 aa)) is the SCP domain.

This sequence belongs to the CRISP family. Expressed in salivary glands.

Its subcellular location is the secreted. Functionally, inhibits platelet aggregation induced by all agonists tested (ADP, arachidonic acid, the thromboxane A2 analog U46619, thrombin, and snake venom snaclecs (TMVA that activates platelet through GPIB, and stejnulxin that specifically acts through GPVI (GP6))). May act by competing with fibrinogen for binding to glycoprotein IIb/IIIa (ITGA2B/ITGB3). In Tabanus yao (Horsefly), this protein is Tabinhibitin 7.